The following is a 219-amino-acid chain: U-scoloptoxin(11)-Sm7a (219 aa).

The N-terminal stretch at 1 to 15 (MYLFLMINYFVLANS) is a signal peptide.

This sequence belongs to the scoloptoxin-11 family. In terms of processing, contains 8 disulfide bonds. As to expression, expressed by the venom gland.

It is found in the secreted. The chain is U-scoloptoxin(11)-Sm7a from Scolopendra morsitans (Tanzanian blue ringleg centipede).